A 158-amino-acid chain; its full sequence is Transcription elongation factor GreA (158 aa).

The stretch at 14 to 76 (LDQLKDELTH…EIESILKNVK (63 aa)) forms a coiled coil.

The protein belongs to the GreA/GreB family.

Necessary for efficient RNA polymerase transcription elongation past template-encoded arresting sites. The arresting sites in DNA have the property of trapping a certain fraction of elongating RNA polymerases that pass through, resulting in locked ternary complexes. Cleavage of the nascent transcript by cleavage factors such as GreA or GreB allows the resumption of elongation from the new 3'terminus. GreA releases sequences of 2 to 3 nucleotides. The sequence is that of Transcription elongation factor GreA from Acholeplasma laidlawii (strain PG-8A).